A 125-amino-acid polypeptide reads, in one-letter code: Phosphoribosyl-AMP cyclohydrolase (125 aa).

Asp-91 is a Mg(2+) binding site. Cys-92 serves as a coordination point for Zn(2+). Positions 93 and 95 each coordinate Mg(2+). Zn(2+) is bound by residues Cys-108 and Cys-115.

The protein belongs to the PRA-CH family. Homodimer. It depends on Mg(2+) as a cofactor. Requires Zn(2+) as cofactor.

The protein resides in the cytoplasm. The catalysed reaction is 1-(5-phospho-beta-D-ribosyl)-5'-AMP + H2O = 1-(5-phospho-beta-D-ribosyl)-5-[(5-phospho-beta-D-ribosylamino)methylideneamino]imidazole-4-carboxamide. It functions in the pathway amino-acid biosynthesis; L-histidine biosynthesis; L-histidine from 5-phospho-alpha-D-ribose 1-diphosphate: step 3/9. Functionally, catalyzes the hydrolysis of the adenine ring of phosphoribosyl-AMP. In Streptomyces griseus subsp. griseus (strain JCM 4626 / CBS 651.72 / NBRC 13350 / KCC S-0626 / ISP 5235), this protein is Phosphoribosyl-AMP cyclohydrolase.